A 391-amino-acid chain; its full sequence is uncharacterized protein (391 aa).

A helical transmembrane segment spans residues 4 to 24; the sequence is FALIVGIVALAIFSFLYIQLY.

It is found in the membrane. This is an uncharacterized protein from Haemophilus influenzae (strain ATCC 51907 / DSM 11121 / KW20 / Rd).